The sequence spans 815 residues: Ataxin-1 (815 aa).

The segment covering 1–41 (MKSNQERSNECLPPKKREIPATSRSSEEKAPTLPSDNHRVE) has biased composition (basic and acidic residues). The tract at residues 1–63 (MKSNQERSNE…GHGGGRHGPA (63 aa)) is disordered. A Glycyl lysine isopeptide (Lys-Gly) (interchain with G-Cter in SUMO) cross-link involves residue K16. Residues 49 to 61 (NPGGRGHGGGRHG) show a composition bias toward gly residues. Residues S82 and S88 each carry the phosphoserine modification. Disordered stretches follow at residues 185–270 (GSLS…PVHL), 329–355 (EKSR…VPHP), and 397–424 (VQQA…PGHR). K194 participates in a covalent cross-link: Glycyl lysine isopeptide (Lys-Gly) (interchain with G-Cter in SUMO). Residues 197–226 (QQQQQQQQQQQQHQHQQQQQQQQQQQQQQH) show a composition bias toward low complexity. 2 positions are modified to phosphoserine: S238 and S253. Residues 243 to 260 (QQNQYVHISSSPQNTGRT) are compositionally biased toward polar residues. Residues 494 to 604 (VGSTDMEASG…TEDFIQSAEI (111 aa)) form a self-association region. The interval 538–815 (LVTQAAYPAM…CIEGRSNVGK (278 aa)) is interaction with USP7. The RNA-binding stretch occupies residues 540–766 (TQAAYPAMVQ…FLTKIEPSKP (227 aa)). The AXH domain occupies 562–693 (SPAAAPPTLP…SLTLKNLKNG (132 aa)). Glycyl lysine isopeptide (Lys-Gly) (interchain with G-Cter in SUMO) cross-links involve residues K609, K696, and K745. The segment at 762–798 (EPSKPAATRKRRWSAPESRKLEKSEDEPPLTLPKPSL) is disordered. S775 carries the post-translational modification Phosphoserine. The Nuclear localization signal motif lies at 794–797 (PKPS).

This sequence belongs to the ATXN1 family. In terms of assembly, homooligomer. Interacts with CIC. Interacts with ANP32A, PQBP1, UBQLN4, ATXN1L and USP7. Directly interacts with RBPJ; this interaction is disrupted in the presence of Notch intracellular domain. Competes with ATXN1L for RBPJ-binding. Found in a complex with CIC and ATXN1L. In terms of processing, ubiquitinated by UBE3A, leading to its degradation by the proteasome. The presence of expanded poly-Gln repeats in spinocerebellar ataxia 1 (SCA1) patients impairs ubiquitination and degradation, leading to accumulation of ATXN1 in neurons and subsequent toxicity. Post-translationally, phosphorylation at Ser-775 increases the pathogenicity of proteins with an expanded polyglutamine tract. Sumoylation is dependent on nuclear localization and phosphorylation at Ser-775. It is reduced in the presence of an expanded polyglutamine tract. As to expression, widely expressed throughout the body.

It localises to the cytoplasm. It is found in the nucleus. Chromatin-binding factor that repress Notch signaling in the absence of Notch intracellular domain by acting as a CBF1 corepressor. Binds to the HEY promoter and might assist, along with NCOR2, RBPJ-mediated repression. Binds RNA in vitro. May be involved in RNA metabolism. In concert with CIC and ATXN1L, involved in brain development. In Homo sapiens (Human), this protein is Ataxin-1 (ATXN1).